The primary structure comprises 299 residues: tRNA pseudouridine synthase B (299 aa).

The active-site Nucleophile is the Asp-49. The PUA domain maps to Met-241–Gly-299.

The protein belongs to the pseudouridine synthase TruB family. Type 1 subfamily.

It catalyses the reaction uridine(55) in tRNA = pseudouridine(55) in tRNA. In terms of biological role, responsible for synthesis of pseudouridine from uracil-55 in the psi GC loop of transfer RNAs. This Symbiobacterium thermophilum (strain DSM 24528 / JCM 14929 / IAM 14863 / T) protein is tRNA pseudouridine synthase B.